Reading from the N-terminus, the 162-residue chain is MRKKNNIKKWLLIIAGFLIICIITLFVMVSGNKVKYEGSGKSGLWMSNLEKSDKTSIGPNYFLNLYWQGSKKEEKWTVVERITLYVDGEKYQDDNVDEYDLSEYTGDEMPGGGRMEDHISTFDYMPEDEVIGHDVLVKVEWRTGQKKQTEAIKLHKKPWYKK.

A signal peptide spans 1–34 (MRKKNNIKKWLLIIAGFLIICIITLFVMVSGNKV).

This is an uncharacterized protein from Bacillus subtilis (strain 168).